A 159-amino-acid polypeptide reads, in one-letter code: Serine-protein kinase RsbW (159 aa).

The protein belongs to the anti-sigma-factor family.

The enzyme catalyses L-seryl-[protein] + ATP = O-phospho-L-seryl-[protein] + ADP + H(+). The catalysed reaction is L-threonyl-[protein] + ATP = O-phospho-L-threonyl-[protein] + ADP + H(+). Negative regulator of sigma-B activity. Phosphorylates and inactivates its specific antagonist protein, RsbV. Upon phosphorylation of RsbV, RsbW is released and binds to sigma-B, thereby blocking its ability to form an RNA polymerase holoenzyme (E-sigma-B). The protein is Serine-protein kinase RsbW of Staphylococcus aureus.